Consider the following 131-residue polypeptide: MSSAAEKKPASKAPAEKKPAAKKTSTSVDGKKRSKVRKETYSSYIYKVLKQTHPDTGISQKSMSILNSFVNDIFERIATEASKLAAYNKKSTISAREIQTAVRLILPGELAKHAVSEGTRAVTKYSSSTQA.

Basic and acidic residues predominate over residues 1 to 19; sequence MSSAAEKKPASKAPAEKKP. The disordered stretch occupies residues 1 to 37; it reads MSSAAEKKPASKAPAEKKPAAKKTSTSVDGKKRSKVR. Residues Lys7 and Lys8 each carry the N6-acetyllysine; alternate modification. Residues Lys7 and Lys8 each participate in a glycyl lysine isopeptide (Lys-Gly) (interchain with G-Cter in SUMO); alternate cross-link. A Phosphoserine modification is found at Ser11. Lys12 carries the post-translational modification N6-acetyllysine. Lys17, Lys18, Lys22, and Lys23 each carry N6-acetyllysine; alternate. Residues Lys17 and Lys18 each participate in a glycyl lysine isopeptide (Lys-Gly) (interchain with G-Cter in SUMO); alternate cross-link. At Lys22 the chain carries N6-butyryllysine; alternate. At Lys23 the chain carries N6-methyllysine; alternate. Lys35 carries the post-translational modification N6-succinyllysine. Residue Lys38 is modified to N6,N6-dimethyllysine. Lys47 bears the N6-succinyllysine mark. Lys124 is covalently cross-linked (Glycyl lysine isopeptide (Lys-Gly) (interchain with G-Cter in ubiquitin)).

The protein belongs to the histone H2B family. The nucleosome is a histone octamer containing two molecules each of H2A, H2B, H3 and H4 assembled in one H3-H4 heterotetramer and two H2A-H2B heterodimers. The octamer wraps approximately 147 bp of DNA. Interacts with NAP1. Monoubiquitinated by the RAD6/UBC2-BRE1 complex to form H2BK123ub1. H2BK123ub1 gives a specific tag for epigenetic transcriptional activation and is also prerequisite for H3K4me and H3K79me formation. H2BK123ub1 also modulates the formation of double-strand breaks during meiosis and is a prerequisite for DNA-damage checkpoint activation. Deubiquitination is performed by UBP8 in presence of SGF11. Post-translationally, phosphorylated by STE20 to form H2BS10ph during progression through meiotic prophase. May be correlated with chromosome condensation. H2BS10ph is also formed after H(2)O(2) treatment, and is a step leading to apoptosis. In terms of processing, acetylated by GCN5, a component of the SAGA complex, to form H2BK11ac and H2BK16ac. H2BK16ac can also be formed by ESA1, a component of the NuA4 histone acetyltransferase (HAT) complex. Acetylation of N-terminal lysines and particularly formation of H2BK11acK16ac has a positive effect on transcription. Sumoylation to form H2BK6su or H2BK7su, and probably also H2BK16su or H2BK17su, occurs preferentially near the telomeres and represses gene transcription.

The protein resides in the nucleus. It localises to the chromosome. Core component of nucleosome. Nucleosomes wrap and compact DNA into chromatin, limiting DNA accessibility to the cellular machineries which require DNA as a template. Histones thereby play a central role in transcription regulation, DNA repair, DNA replication and chromosomal stability. DNA accessibility is regulated via a complex set of post-translational modifications of histones, also called histone code, and nucleosome remodeling. The polypeptide is Histone H2B.2 (HTB2) (Saccharomyces cerevisiae (strain ATCC 204508 / S288c) (Baker's yeast)).